Reading from the N-terminus, the 226-residue chain is LexA repressor (226 aa).

A DNA-binding region (H-T-H motif) is located at residues 42–62 (MREIGDAVGLASLSSVTHQLN). Catalysis depends on for autocatalytic cleavage activity residues serine 150 and lysine 187.

The protein belongs to the peptidase S24 family. As to quaternary structure, homodimer.

It carries out the reaction Hydrolysis of Ala-|-Gly bond in repressor LexA.. Represses a number of genes involved in the response to DNA damage (SOS response), including recA and lexA. In the presence of single-stranded DNA, RecA interacts with LexA causing an autocatalytic cleavage which disrupts the DNA-binding part of LexA, leading to derepression of the SOS regulon and eventually DNA repair. This is LexA repressor from Clavibacter sepedonicus (Clavibacter michiganensis subsp. sepedonicus).